Reading from the N-terminus, the 38-residue chain is Large ribosomal subunit protein bL36 (38 aa).

This sequence belongs to the bacterial ribosomal protein bL36 family.

The protein is Large ribosomal subunit protein bL36 of Ectopseudomonas mendocina (strain ymp) (Pseudomonas mendocina).